A 399-amino-acid chain; its full sequence is Guanine nucleotide-binding protein G(f) subunit alpha (399 aa).

A G-alpha domain is found at 46 to 399; sequence TTVKILLLGT…SENVSSMGLF (354 aa). The interval 49–62 is G1 motif; sequence KILLLGTAESGKTT. GTP contacts are provided by residues 54-61, 188-194, 221-225, 290-293, and Ala371; these read GTAESGKT, LHSRKIT, DVGGQ, and NKYD. The segment at 186–194 is G2 motif; it reads DILHSRKIT. Thr194 provides a ligand contact to Mg(2+). The tract at residues 217 to 226 is G3 motif; the sequence is FQMYDVGGQR. Residues 286–293 are G4 motif; it reads IVFLNKYD. The G5 motif stretch occupies residues 369–374; sequence TVATDT.

The protein belongs to the G-alpha family. As to quaternary structure, g proteins are composed of 3 units; alpha, beta and gamma. The alpha chain contains the guanine nucleotide binding site. As to expression, during embryogenesis, expressed primarily in the developing gut and transiently in the amnioserosa.

Its function is as follows. Guanine nucleotide-binding proteins (G proteins) are involved as modulators or transducers in various transmembrane signaling systems. This Drosophila melanogaster (Fruit fly) protein is Guanine nucleotide-binding protein G(f) subunit alpha (Galphaf).